Here is a 79-residue protein sequence, read N- to C-terminus: Sulfur carrier protein TusA (79 aa).

Residue Cys17 is the Cysteine persulfide intermediate of the active site.

This sequence belongs to the sulfur carrier protein TusA family.

It is found in the cytoplasm. Its function is as follows. Sulfur carrier protein which probably makes part of a sulfur-relay system. This Pasteurella multocida (strain Pm70) protein is Sulfur carrier protein TusA.